A 287-amino-acid chain; its full sequence is ATP synthase gamma chain (287 aa).

The protein belongs to the ATPase gamma chain family. In terms of assembly, F-type ATPases have 2 components, CF(1) - the catalytic core - and CF(0) - the membrane proton channel. CF(1) has five subunits: alpha(3), beta(3), gamma(1), delta(1), epsilon(1). CF(0) has three main subunits: a, b and c.

The protein resides in the cell inner membrane. Produces ATP from ADP in the presence of a proton gradient across the membrane. The gamma chain is believed to be important in regulating ATPase activity and the flow of protons through the CF(0) complex. This Stenotrophomonas maltophilia (strain K279a) protein is ATP synthase gamma chain.